The primary structure comprises 142 residues: Large ribosomal subunit protein uL11 (142 aa).

Belongs to the universal ribosomal protein uL11 family. Part of the ribosomal stalk of the 50S ribosomal subunit. Interacts with L10 and the large rRNA to form the base of the stalk. L10 forms an elongated spine to which L12 dimers bind in a sequential fashion forming a multimeric L10(L12)X complex. Post-translationally, one or more lysine residues are methylated.

Its function is as follows. Forms part of the ribosomal stalk which helps the ribosome interact with GTP-bound translation factors. This is Large ribosomal subunit protein uL11 from Gamma-proteobacterium EBAC31A08.